The primary structure comprises 491 residues: MTRSYQIRTYGCQMNVHDSERLAGMLEDAGYVRAGTDVDPDVVVFNTCAVRENADNRLYGNLGHLRPAKDRNPGMQIAVGGCLAQKDRGEIVKRAPWVDVVFGTHNLGSLPTLLERARHNEEAEVEILESLDVFPSTLPARRESAYSGWVSVSVGCNNTCTFCIVPALRGKEKDRRPGEILSEVQALVSEGVLEVTLLGQNVNAYGVEFGDRFAFGKLLRSCGEIEGLERVRFTSPHPRDFTDDVIAAMAETPNVCHQLHMPLQSGSDRVLKQMRRSYRSQRYLDILRKVREAMPDAAITTDIIVGFPGETEEDFEATMQVVREARFASAFTFQYSKRPGTPAAEMEGQLPKEVVQQRYDRLIELQNQISWDVGKELVGRSVELLVAEGEGRKDTETHRLSGRARDGRLVHFTPVGAVDGQVRPGDVVHTTITRAAPHHLVADSEITAHRRTRAGDHWEEGVRPKTSGVSLGLPSFGAPPAQPAAQQGCAC.

In terms of domain architecture, MTTase N-terminal spans 3-119; the sequence is RSYQIRTYGC…LPTLLERARH (117 aa). 6 residues coordinate [4Fe-4S] cluster: Cys12, Cys48, Cys82, Cys156, Cys160, and Cys163. One can recognise a Radical SAM core domain in the interval 142-372; the sequence is RESAYSGWVS…IELQNQISWD (231 aa). Positions 375–446 constitute a TRAM domain; sequence KELVGRSVEL…PHHLVADSEI (72 aa).

The protein belongs to the methylthiotransferase family. MiaB subfamily. Monomer. The cofactor is [4Fe-4S] cluster.

It is found in the cytoplasm. It carries out the reaction N(6)-dimethylallyladenosine(37) in tRNA + (sulfur carrier)-SH + AH2 + 2 S-adenosyl-L-methionine = 2-methylsulfanyl-N(6)-dimethylallyladenosine(37) in tRNA + (sulfur carrier)-H + 5'-deoxyadenosine + L-methionine + A + S-adenosyl-L-homocysteine + 2 H(+). Its function is as follows. Catalyzes the methylthiolation of N6-(dimethylallyl)adenosine (i(6)A), leading to the formation of 2-methylthio-N6-(dimethylallyl)adenosine (ms(2)i(6)A) at position 37 in tRNAs that read codons beginning with uridine. The sequence is that of tRNA-2-methylthio-N(6)-dimethylallyladenosine synthase from Saccharopolyspora erythraea (strain ATCC 11635 / DSM 40517 / JCM 4748 / NBRC 13426 / NCIMB 8594 / NRRL 2338).